Reading from the N-terminus, the 338-residue chain is ATPase GET3 (338 aa).

Residue Lys-33–Thr-40 coordinates ATP. Asp-62 is an active-site residue. ATP contacts are provided by Glu-242 and Asn-269. Zn(2+)-binding residues include Cys-280 and Cys-283.

Belongs to the arsA ATPase family. In terms of assembly, homodimer.

It localises to the cytoplasm. The protein localises to the endoplasmic reticulum. Functionally, ATPase required for the post-translational delivery of tail-anchored (TA) proteins to the endoplasmic reticulum. Recognizes and selectively binds the transmembrane domain of TA proteins in the cytosol. This complex then targets to the endoplasmic reticulum by membrane-bound receptors, where the tail-anchored protein is released for insertion. This process is regulated by ATP binding and hydrolysis. ATP binding drives the homodimer towards the closed dimer state, facilitating recognition of newly synthesized TA membrane proteins. ATP hydrolysis is required for insertion. Subsequently, the homodimer reverts towards the open dimer state, lowering its affinity for the membrane-bound receptor, and returning it to the cytosol to initiate a new round of targeting. The sequence is that of ATPase GET3 from Uncinocarpus reesii (strain UAMH 1704).